The chain runs to 405 residues: Tetracycline resistance protein, class E (405 aa).

The next 12 helical transmembrane spans lie at 6–27 (MMAL…PVLP), 42–62 (NYGV…PLLG), 74–94 (LLLS…ASVV), 102–122 (LIAG…ADVT), 131–151 (FGMM…IGGF), 159–179 (APFM…LFIL), 215–235 (LVVF…WVLF), 245–265 (VMVG…QGLA), 278–298 (AIAV…VITQ), 299–319 (SWMV…LPAL), 337–357 (GVLT…FAFL), and 364–385 (TWNG…IILR).

Belongs to the major facilitator superfamily. TCR/Tet family.

The protein resides in the cell inner membrane. Its function is as follows. Resistance to tetracycline by an active tetracycline efflux. This is an energy-dependent process that decreases the accumulation of the antibiotic in whole cells. This protein functions as a metal-tetracycline/H(+) antiporter. The protein is Tetracycline resistance protein, class E (tetA) of Escherichia coli.